Here is a 4450-residue protein sequence, read N- to C-terminus: Gramicidin S synthase 2 (4450 aa).

Residues 467 to 1044 are domain 1 (proline-activating); sequence DKTIHQLFTE…IQEISNYING (578 aa). 4 consecutive Carrier domains span residues 971 to 1046, 2006 to 2081, 3051 to 3126, and 4089 to 4164; these read VPTN…NGAK, APSS…ADGE, APRT…EETD, and APRN…THQE. Ser1006, Ser2041, Ser3086, and Ser4124 each carry O-(pantetheine 4'-phosphoryl)serine. A domain 2 (valine-activating) region spans residues 1521–2080; it reads DHVAVGWKDQ…SALAQYIADG (560 aa). Residues 2538–3134 are domain 3 (ornithine-activating); the sequence is YATNKIFHEL…TDTEQYMAIQ (597 aa). The segment at 3590–4172 is domain 4 (leucine-activating); it reads IQELFEEQVK…QESENNVHQP (583 aa).

The protein belongs to the ATP-dependent AMP-binding enzyme family. As to quaternary structure, large multienzyme complex of GrsA and GrsB. Requires pantetheine 4'-phosphate as cofactor.

It functions in the pathway antibiotic biosynthesis; gramicidin S biosynthesis. This protein is a multifunctional enzyme, able to activate and polymerize the amino acids Pro, Val, Orn and Leu. Activation sites for these AA consist of individual domains. The sequence is that of Gramicidin S synthase 2 (grsB) from Brevibacillus brevis (Bacillus brevis).